A 451-amino-acid polypeptide reads, in one-letter code: Methylenetetrahydrofolate--tRNA-(uracil-5-)-methyltransferase TrmFO (451 aa).

10-15 lines the FAD pocket; the sequence is GGGLAG.

Belongs to the MnmG family. TrmFO subfamily. FAD is required as a cofactor.

It is found in the cytoplasm. It carries out the reaction uridine(54) in tRNA + (6R)-5,10-methylene-5,6,7,8-tetrahydrofolate + NADH + H(+) = 5-methyluridine(54) in tRNA + (6S)-5,6,7,8-tetrahydrofolate + NAD(+). The catalysed reaction is uridine(54) in tRNA + (6R)-5,10-methylene-5,6,7,8-tetrahydrofolate + NADPH + H(+) = 5-methyluridine(54) in tRNA + (6S)-5,6,7,8-tetrahydrofolate + NADP(+). Catalyzes the folate-dependent formation of 5-methyl-uridine at position 54 (M-5-U54) in all tRNAs. The polypeptide is Methylenetetrahydrofolate--tRNA-(uracil-5-)-methyltransferase TrmFO (Anaeromyxobacter sp. (strain Fw109-5)).